The chain runs to 36 residues: Photosystem I reaction center subunit VIII (36 aa).

A helical membrane pass occupies residues 6 to 28 (LPSIFVPLVGLLFPAIAMVSLFF).

It belongs to the PsaI family.

The protein resides in the plastid. It localises to the chloroplast thylakoid membrane. In terms of biological role, may help in the organization of the PsaL subunit. This chain is Photosystem I reaction center subunit VIII, found in Nymphaea alba (White water-lily).